The chain runs to 288 residues: Diaminopimelate epimerase (288 aa).

N14 and N67 together coordinate substrate. C76 serves as the catalytic Proton donor. Substrate contacts are provided by residues 77–78 (GN), N166, N199, and 217–218 (ER). The active-site Proton acceptor is C226. 227–228 (GT) provides a ligand contact to substrate.

The protein belongs to the diaminopimelate epimerase family. Homodimer.

The protein resides in the cytoplasm. It carries out the reaction (2S,6S)-2,6-diaminopimelate = meso-2,6-diaminopimelate. It functions in the pathway amino-acid biosynthesis; L-lysine biosynthesis via DAP pathway; DL-2,6-diaminopimelate from LL-2,6-diaminopimelate: step 1/1. Functionally, catalyzes the stereoinversion of LL-2,6-diaminopimelate (L,L-DAP) to meso-diaminopimelate (meso-DAP), a precursor of L-lysine and an essential component of the bacterial peptidoglycan. The sequence is that of Diaminopimelate epimerase from Bacillus cereus (strain 03BB102).